Reading from the N-terminus, the 888-residue chain is Alanine--tRNA ligase (888 aa).

Positions 573, 577, 676, and 680 each coordinate Zn(2+).

It belongs to the class-II aminoacyl-tRNA synthetase family. The cofactor is Zn(2+).

It is found in the cytoplasm. The enzyme catalyses tRNA(Ala) + L-alanine + ATP = L-alanyl-tRNA(Ala) + AMP + diphosphate. Catalyzes the attachment of alanine to tRNA(Ala) in a two-step reaction: alanine is first activated by ATP to form Ala-AMP and then transferred to the acceptor end of tRNA(Ala). Also edits incorrectly charged Ser-tRNA(Ala) and Gly-tRNA(Ala) via its editing domain. The chain is Alanine--tRNA ligase from Corynebacterium glutamicum (strain ATCC 13032 / DSM 20300 / JCM 1318 / BCRC 11384 / CCUG 27702 / LMG 3730 / NBRC 12168 / NCIMB 10025 / NRRL B-2784 / 534).